The following is a 1969-amino-acid chain: Echinoderm microtubule-associated protein-like 5 (1969 aa).

WD repeat units lie at residues 59 to 100 (GHSD…TISV), 104 to 145 (VHTH…MLSM), 148 to 187 (GHTDRIFDISWDLYQPNKLVSCGVKHIKFWSLCGNALTPK), 195 to 233 (GDLQTILCLACARDELTYSGALNGDIYVWKGINLIRTIQ), 235 to 273 (AHAAGIFSMNACEEGFATGGRDGCIRLWDLTFKPITVID), 280 to 321 (GYKG…LIMQ), 323 to 362 (HCEGELWALAVHPTKPLAVTGSDDRSVRIWSLVDHALIAR), 406 to 445 (DRKEAIHELKYSPDGTYLAVGCNDSSVDIYGVAQRYKKVG), 449 to 488 (GSLSFITHLDWSSDSRYLQTNDGNGKRLFYRMPGGKEVTS), and 561 to 601 (GHSA…KLKD). A disordered region spans residues 609–633 (ESLADSHSDESDSDLSDVPELDSEI). Positions 619 to 633 (SDSDLSDVPELDSEI) are enriched in acidic residues. 9 WD repeats span residues 725–766 (GHDD…PLSI), 770–811 (HHQY…KLSI), 814–853 (GSKDKIFVVKMNPYVPDKLITAGIKHMKFWRKAGGGLIGR), 861–900 (GKNDTMMCAVYGWTEEMAFSGTSTGDVCIWRDIFLVKTVK), 901–940 (AHDGPVFSMHALEKGFVTGGKDGIVALWDDSFERCLKTYA), 996–1035 (HMEGEVWGLATHPYLPICATVSDDKTLRIWDLSPSHCMLA), 1038–1077 (KLKKGGRCCCFSPDGKALAVGLNDGSFLMANADTLEDLVS), 1080–1120 (HRKD…RVGI), and 1236–1276 (AHST…YREK). Disordered stretches follow at residues 1274–1297 (REKRPCDSEESDIDSEEDGGYDSD) and 1326–1355 (QQKEPSIDERPPVSRAPPQPEKLQTNNVGK). Positions 1281–1294 (SEESDIDSEEDGGY) are enriched in acidic residues. Positions 1326-1337 (QQKEPSIDERPP) are enriched in basic and acidic residues. WD repeat units follow at residues 1412–1463 (EHND…TLSI), 1467–1508 (YHSK…KIAS), 1511–1550 (GHNQRIFVAEFRPDSDTQFVSVGVKHVKFWTLAGRALLSK), 1560–1598 (ARMQTMLAIAFGANNLTFTGTISGDVCVWKDHILCRIVA), 1600–1646 (AHNG…RAFR), 1691–1731 (GHVD…MLNK), 1733–1774 (NLGH…GKKR), 1775–1814 (DRRCAIHDIRFSPDSRYLAVGSSENSVDFYDLTLGPTLNR), 1887–1926 (AEKADVNCACVSHSGISLVTGDDFGMVKLFDFPCPEKFAK), and 1932–1969 (GHSPHVTNIRFTSGDRHVVSAGGDDCSLFVWKCVHTPH).

The protein belongs to the WD repeat EMAP family.

It localises to the cytoplasm. The protein localises to the cytoskeleton. May modify the assembly dynamics of microtubules, such that microtubules are slightly longer, but more dynamic. This chain is Echinoderm microtubule-associated protein-like 5 (EML5), found in Homo sapiens (Human).